We begin with the raw amino-acid sequence, 37 residues long: Photosystem I reaction center subunit IX (37 aa).

The chain crosses the membrane as a helical span at residues 4–24 (FLSSAPVLLTAMMVFTAGLLI).

It belongs to the PsaJ family.

The protein resides in the cellular thylakoid membrane. Functionally, may help in the organization of the PsaE and PsaF subunits. This Picosynechococcus sp. (strain ATCC 27264 / PCC 7002 / PR-6) (Agmenellum quadruplicatum) protein is Photosystem I reaction center subunit IX.